A 322-amino-acid chain; its full sequence is Endochitinase CH25 (322 aa).

An N-terminal signal peptide occupies residues 1–20 (MKSCLLLFLIFSFLLSFSLA). A Chitin-binding type-1 domain is found at 21–62 (EQCGRQAGGALCPNGLCCSEFGWCGDTEAYCKQPGCQSQCGG). Intrachain disulfides connect Cys23–Cys38, Cys32–Cys44, Cys37–Cys51, Cys56–Cys60, Cys92–Cys154, Cys166–Cys174, and Cys273–Cys305. Glu136 serves as the catalytic Proton donor.

It belongs to the glycosyl hydrolase 19 family. Chitinase class I subfamily. In terms of tissue distribution, high expression in roots, moderate in floral tissues and low in stems and leaves.

It catalyses the reaction Random endo-hydrolysis of N-acetyl-beta-D-glucosaminide (1-&gt;4)-beta-linkages in chitin and chitodextrins.. In Brassica napus (Rape), this protein is Endochitinase CH25.